The following is a 283-amino-acid chain: Nucleotide-binding protein THEYE_A0235 (283 aa).

12–19 contributes to the ATP binding site; that stretch reads GLSGGGKT. 62–65 serves as a coordination point for GTP; sequence DIRV.

It belongs to the RapZ-like family.

Its function is as follows. Displays ATPase and GTPase activities. In Thermodesulfovibrio yellowstonii (strain ATCC 51303 / DSM 11347 / YP87), this protein is Nucleotide-binding protein THEYE_A0235.